A 392-amino-acid polypeptide reads, in one-letter code: Phosphoglycerate kinase (392 aa).

Residues 21–23 (DFN), R36, 59–62 (HLGR), R118, and R151 each bind substrate. Residues K201, G292, E323, and 349-352 (GGDS) each bind ATP.

This sequence belongs to the phosphoglycerate kinase family. Monomer.

It localises to the cytoplasm. It catalyses the reaction (2R)-3-phosphoglycerate + ATP = (2R)-3-phospho-glyceroyl phosphate + ADP. Its pathway is carbohydrate degradation; glycolysis; pyruvate from D-glyceraldehyde 3-phosphate: step 2/5. This is Phosphoglycerate kinase from Borrelia hermsii (strain HS1 / DAH).